A 316-amino-acid polypeptide reads, in one-letter code: MARFSPQDLADHLKDGLLSFPATAFQDDLEVDEVAYVEHIEWQSSYPVAGLFAAGGTGEGFSLTVEENHRVTQLAVQASSPEVPVLGSATGSTKSAIANAQGAEAAGAEGVLLLPPYLTECDAEGLYNHAAAVCESTSLGVIVYNRANAIYSPEVIARLSERYPNFIGFKDGTGNIEHLAKITTLCGDRLFYLGGLPTAETFALPLLQMGMSTYSSAMFNFIPDFALSFYADVRAQDSAAVKQKLSDFVLPYLDIRDRAQGYGVSIVKGGLKAVGRNAGGVRPPLRNLSEQDIADLSDLLATSGAGSYRLPVEVKA.

The protein belongs to the DapA family.

It carries out the reaction 5-dehydro-4-deoxy-D-glucarate + H(+) = 2,5-dioxopentanoate + CO2 + H2O. Its pathway is carbohydrate acid metabolism; D-glucarate degradation; 2,5-dioxopentanoate from D-glucarate: step 2/2. The polypeptide is Probable 5-dehydro-4-deoxyglucarate dehydratase (Corynebacterium glutamicum (strain R)).